Consider the following 102-residue polypeptide: Urease subunit beta (102 aa).

The protein belongs to the urease beta subunit family. Heterotrimer of UreA (gamma), UreB (beta) and UreC (alpha) subunits. Three heterotrimers associate to form the active enzyme.

It is found in the cytoplasm. The enzyme catalyses urea + 2 H2O + H(+) = hydrogencarbonate + 2 NH4(+). It participates in nitrogen metabolism; urea degradation; CO(2) and NH(3) from urea (urease route): step 1/1. The protein is Urease subunit beta of Bordetella parapertussis (strain 12822 / ATCC BAA-587 / NCTC 13253).